Consider the following 273-residue polypeptide: Putative phosphoenolpyruvate synthase regulatory protein (273 aa).

ADP is bound at residue 153-160 (GVSRCGKT).

The protein belongs to the pyruvate, phosphate/water dikinase regulatory protein family. PSRP subfamily.

The catalysed reaction is [pyruvate, water dikinase] + ADP = [pyruvate, water dikinase]-phosphate + AMP + H(+). The enzyme catalyses [pyruvate, water dikinase]-phosphate + phosphate + H(+) = [pyruvate, water dikinase] + diphosphate. Bifunctional serine/threonine kinase and phosphorylase involved in the regulation of the phosphoenolpyruvate synthase (PEPS) by catalyzing its phosphorylation/dephosphorylation. The sequence is that of Putative phosphoenolpyruvate synthase regulatory protein from Yersinia enterocolitica serotype O:8 / biotype 1B (strain NCTC 13174 / 8081).